A 228-amino-acid polypeptide reads, in one-letter code: Orotidine 5'-phosphate decarboxylase (228 aa).

Substrate-binding positions include Asp-11, Lys-33, 60 to 69 (DLKLHDIPNT), Thr-117, Arg-178, Gln-186, Gly-206, and Arg-207. Lys-62 (proton donor) is an active-site residue.

It belongs to the OMP decarboxylase family. Type 1 subfamily. Homodimer.

It catalyses the reaction orotidine 5'-phosphate + H(+) = UMP + CO2. Its pathway is pyrimidine metabolism; UMP biosynthesis via de novo pathway; UMP from orotate: step 2/2. Functionally, catalyzes the decarboxylation of orotidine 5'-monophosphate (OMP) to uridine 5'-monophosphate (UMP). This is Orotidine 5'-phosphate decarboxylase from Ehrlichia canis (strain Jake).